Reading from the N-terminus, the 436-residue chain is 3-ketoacyl-CoA thiolase (436 aa).

The Acyl-thioester intermediate role is filled by Cys99. Active-site proton acceptor residues include His392 and Cys422.

Belongs to the thiolase-like superfamily. Thiolase family. Heterotetramer of two alpha chains (FadJ) and two beta chains (FadI).

Its subcellular location is the cytoplasm. The enzyme catalyses an acyl-CoA + acetyl-CoA = a 3-oxoacyl-CoA + CoA. The protein operates within lipid metabolism; fatty acid beta-oxidation. Catalyzes the final step of fatty acid oxidation in which acetyl-CoA is released and the CoA ester of a fatty acid two carbons shorter is formed. In Salmonella typhimurium (strain LT2 / SGSC1412 / ATCC 700720), this protein is 3-ketoacyl-CoA thiolase.